An 807-amino-acid chain; its full sequence is Shutoff protein (807 aa).

The interval 1-88 (MESVEKKDSL…QVGRGDERHG (88 aa)) is disordered. The segment covering 16-29 (FATTASTDAANAPT) has biased composition (polar residues). 2 stretches are compositionally biased toward basic and acidic residues: residues 59–70 (RSVPTEDKKQDQ) and 79–88 (QVGRGDERHG). The tract at residues 280–345 (VMSELIVRRA…AVLVTVELEC (66 aa)) is binding to host EIF4G. Residues 348–466 (RFFADPEMQR…DLWTAFNERS (119 aa)) form the RRM domain. Phosphotyrosine; by host is present on residues tyrosine 365 and tyrosine 682. Residues 684 to 807 (DPQSGEELNP…AGTARSPTQP (124 aa)) are disordered. The span at 726-743 (GRGGILGQSGRGGFGRGG) shows a compositional bias: gly residues. The span at 744 to 755 (GGHDGRLGEPRR) shows a compositional bias: basic and acidic residues. Over residues 756 to 765 (GSFRGRRGVR) the composition is skewed to basic residues.

Belongs to the adenoviridae shutoff protein family. As to quaternary structure, monomer. Interacts with hexon protein; this interaction allows chaperoning and trimerization of hexon proteins. Interacts (via N-terminus) with host initiation factor EIF4G (via C-terminus). Interacts (via RRM domain) with viral mRNAs that contain the tripartite leader; this interaction allows ribosome shunting and expression of viral late mRNAs. Might be cleaved by the viral protease. Post-translationally, phosphorylated. Tyrosine phosphorylation enhances preferential binding to tripartite leader mRNAs and allows ribosome shunting. In terms of processing, methylated. Asymmetric dimethylation by host PRMT1 of the Arg/Gly-rich region may regulate shutoff protein binding to hexon and promote the capsid assembly in the nucleus.

Its subcellular location is the host cytoplasm. Functionally, protein that inhibits host translation while promoting late viral translation by ribosome shunting. Blocks host cap-dependent translation by binding to eIF4G, displacing MKNK1 from cap initiation complexes and preventing EIF4E phosphorylation. Binds to the tripartite leader sequence of viral late mRNAs and recruits host eIF4G, PABPC1/poly-A binding protein and 40S ribosomes subunits on viral mRNAs, allowing ribosome shunting and efficient translation of late viral mRNAs even though conventional translation via ribosome scanning from the cap has been shut off in the host cell. During assembly, acts as a chaperone protein that helps hexon proteins assembly into trimers. This Homo sapiens (Human) protein is Shutoff protein.